A 596-amino-acid chain; its full sequence is Isocitrate dehydrogenase kinase/phosphatase (596 aa).

ATP-binding positions include 316–322 and K337; that span reads APGIRGM. The active site involves D372.

This sequence belongs to the AceK family.

It localises to the cytoplasm. It carries out the reaction L-seryl-[isocitrate dehydrogenase] + ATP = O-phospho-L-seryl-[isocitrate dehydrogenase] + ADP + H(+). Its function is as follows. Bifunctional enzyme which can phosphorylate or dephosphorylate isocitrate dehydrogenase (IDH) on a specific serine residue. This is a regulatory mechanism which enables bacteria to bypass the Krebs cycle via the glyoxylate shunt in response to the source of carbon. When bacteria are grown on glucose, IDH is fully active and unphosphorylated, but when grown on acetate or ethanol, the activity of IDH declines drastically concomitant with its phosphorylation. This Cronobacter sakazakii (strain ATCC BAA-894) (Enterobacter sakazakii) protein is Isocitrate dehydrogenase kinase/phosphatase.